We begin with the raw amino-acid sequence, 193 residues long: Cell wall galactomannoprotein (193 aa).

An N-terminal signal peptide occupies residues 1-17 (MFFRILALLPLVFLVTA). N-linked (GlcNAc...) asparagine glycans are attached at residues asparagine 38 and asparagine 173.

It belongs to the cell wall mannoprotein 1 family. Galactomannoprotein, glycosylated.

It is found in the secreted. The protein localises to the cell wall. Constitutive protein of the cell wall. This Armillaria ostoyae (Armillaria root rot fungus) protein is Cell wall galactomannoprotein.